The following is a 350-amino-acid chain: Dihydroorotase (350 aa).

Zn(2+)-binding residues include histidine 17 and histidine 19. Substrate-binding positions include 19 to 21 (HFR) and asparagine 45. Positions 103, 140, and 178 each coordinate Zn(2+). Position 103 is an N6-carboxylysine (lysine 103). Residue histidine 140 coordinates substrate. Leucine 223 is a binding site for substrate. Aspartate 251 contributes to the Zn(2+) binding site. Residue aspartate 251 is part of the active site. Residues histidine 255 and alanine 267 each coordinate substrate.

It belongs to the metallo-dependent hydrolases superfamily. DHOase family. Class II DHOase subfamily. As to quaternary structure, homodimer. Zn(2+) is required as a cofactor.

It catalyses the reaction (S)-dihydroorotate + H2O = N-carbamoyl-L-aspartate + H(+). The protein operates within pyrimidine metabolism; UMP biosynthesis via de novo pathway; (S)-dihydroorotate from bicarbonate: step 3/3. Its function is as follows. Catalyzes the reversible cyclization of carbamoyl aspartate to dihydroorotate. The sequence is that of Dihydroorotase from Photorhabdus laumondii subsp. laumondii (strain DSM 15139 / CIP 105565 / TT01) (Photorhabdus luminescens subsp. laumondii).